A 254-amino-acid polypeptide reads, in one-letter code: Imidazole glycerol phosphate synthase subunit HisF (254 aa).

Residues Asp-11 and Asp-130 contribute to the active site.

It belongs to the HisA/HisF family. In terms of assembly, heterodimer of HisH and HisF.

It localises to the cytoplasm. The catalysed reaction is 5-[(5-phospho-1-deoxy-D-ribulos-1-ylimino)methylamino]-1-(5-phospho-beta-D-ribosyl)imidazole-4-carboxamide + L-glutamine = D-erythro-1-(imidazol-4-yl)glycerol 3-phosphate + 5-amino-1-(5-phospho-beta-D-ribosyl)imidazole-4-carboxamide + L-glutamate + H(+). Its pathway is amino-acid biosynthesis; L-histidine biosynthesis; L-histidine from 5-phospho-alpha-D-ribose 1-diphosphate: step 5/9. Functionally, IGPS catalyzes the conversion of PRFAR and glutamine to IGP, AICAR and glutamate. The HisF subunit catalyzes the cyclization activity that produces IGP and AICAR from PRFAR using the ammonia provided by the HisH subunit. The protein is Imidazole glycerol phosphate synthase subunit HisF of Staphylococcus carnosus (strain TM300).